We begin with the raw amino-acid sequence, 29 residues long: Cytochrome b6-f complex subunit 8 (29 aa).

Residues 3 to 23 traverse the membrane as a helical segment; that stretch reads MVSLAWAALMVVFTFSLSLVV.

Belongs to the PetN family. As to quaternary structure, the 4 large subunits of the cytochrome b6-f complex are cytochrome b6, subunit IV (17 kDa polypeptide, PetD), cytochrome f and the Rieske protein, while the 4 small subunits are PetG, PetL, PetM and PetN. The complex functions as a dimer.

It is found in the plastid. Its subcellular location is the chloroplast thylakoid membrane. Its function is as follows. Component of the cytochrome b6-f complex, which mediates electron transfer between photosystem II (PSII) and photosystem I (PSI), cyclic electron flow around PSI, and state transitions. In Cucumis sativus (Cucumber), this protein is Cytochrome b6-f complex subunit 8.